A 676-amino-acid polypeptide reads, in one-letter code: Solute carrier family 26 member 10 (676 aa).

The interval 1–24 is disordered; that stretch reads MSGPLASGTCSDPEEVSDLKSPLS. 11 helical membrane passes run 101–121, 124–144, 149–165, 190–210, 226–246, 267–287, 300–320, 353–373, 398–418, 426–446, and 487–507; these read AVAG…FALL, VPPV…SLLG, LSTG…GSVV, VGAA…MFVL, ALTS…LLGL, ALSQ…VLLV, LLTP…LCFT, ILAD…SLAS, ISSL…SLLV, LAGL…RPFF, and IVTW…VGVV. Residues 539-660 form the STAS domain; that stretch reads ESRKLLQVPG…VSVQDAAAHA (122 aa).

The protein belongs to the SLC26A/SulP transporter (TC 2.A.53) family.

It is found in the membrane. In terms of biological role, chloride/bicarbonate exchanger. This chain is Solute carrier family 26 member 10 (Slc26a10), found in Mus musculus (Mouse).